The chain runs to 408 residues: Aminopeptidase T (408 aa).

Residues Glu250, Glu316, Glu340, His345, His376, and Asp378 each contribute to the a divalent metal cation site.

The protein belongs to the peptidase M29 family. In terms of assembly, homodimer. Requires Co(2+) as cofactor. Zn(2+) is required as a cofactor. It depends on Mg(2+) as a cofactor.

Functionally, metal-dependent exopeptidase. This Thermus thermophilus (strain ATCC 27634 / DSM 579 / HB8) protein is Aminopeptidase T.